Consider the following 391-residue polypeptide: Na(+)/H(+) antiporter NhaA 2 (391 aa).

Transmembrane regions (helical) follow at residues 25 to 45 (AGGI…NSPL), 56 to 76 (VWLG…IFFL), 98 to 118 (ALPG…YIAI), 128 to 148 (GWAI…SLLG), 157 to 177 (VFLA…IAFF), 180 to 200 (SGLN…LVAL), 208 to 228 (LLPY…SGVH), 264 to 284 (VAFA…LSGI), 297 to 317 (VALG…VLAI), 335 to 355 (GVAI…NLAF), and 364 to 384 (EVKV…IVLL).

Belongs to the NhaA Na(+)/H(+) (TC 2.A.33) antiporter family.

It is found in the cell inner membrane. It catalyses the reaction Na(+)(in) + 2 H(+)(out) = Na(+)(out) + 2 H(+)(in). Functionally, na(+)/H(+) antiporter that extrudes sodium in exchange for external protons. This chain is Na(+)/H(+) antiporter NhaA 2, found in Pseudomonas syringae pv. tomato (strain ATCC BAA-871 / DC3000).